Consider the following 194-residue polypeptide: Threonylcarbamoyl-AMP synthase (194 aa).

Positions 11-194 (FRNLMKIINA…GINYKIIRKG (184 aa)) constitute a YrdC-like domain.

This sequence belongs to the SUA5 family. TsaC subfamily.

The protein localises to the cytoplasm. The catalysed reaction is L-threonine + hydrogencarbonate + ATP = L-threonylcarbamoyladenylate + diphosphate + H2O. In terms of biological role, required for the formation of a threonylcarbamoyl group on adenosine at position 37 (t(6)A37) in tRNAs that read codons beginning with adenine. Catalyzes the conversion of L-threonine, HCO(3)(-)/CO(2) and ATP to give threonylcarbamoyl-AMP (TC-AMP) as the acyladenylate intermediate, with the release of diphosphate. This Wigglesworthia glossinidia brevipalpis protein is Threonylcarbamoyl-AMP synthase.